Consider the following 83-residue polypeptide: Turripeptide Lol11.1 (83 aa).

A signal peptide spans 1-27 (MARQMMTVGCLILIVVLLDMMVPVFNT).

This sequence belongs to the conopeptide I2-like superfamily. Post-translationally, contains 4 disulfide bonds. As to expression, expressed by the venom duct.

It is found in the secreted. Its function is as follows. Acts as a neurotoxin by inhibiting voltage-gated potassium channels (Kv). This Iotyrris olangoensis (Sea snail) protein is Turripeptide Lol11.1.